The following is a 550-amino-acid chain: Hydroxylamine reductase (550 aa).

[2Fe-2S] cluster is bound by residues Cys3, Cys6, Cys18, and Cys25. Hybrid [4Fe-2O-2S] cluster-binding residues include His249, Glu273, Cys317, Cys405, Cys433, Cys458, Glu492, and Lys494. Residue Cys405 is modified to Cysteine persulfide.

Belongs to the HCP family. Requires [2Fe-2S] cluster as cofactor. It depends on hybrid [4Fe-2O-2S] cluster as a cofactor.

The protein localises to the cytoplasm. It catalyses the reaction A + NH4(+) + H2O = hydroxylamine + AH2 + H(+). Its function is as follows. Catalyzes the reduction of hydroxylamine to form NH(3) and H(2)O. The protein is Hydroxylamine reductase of Escherichia coli O7:K1 (strain IAI39 / ExPEC).